Here is a 598-residue protein sequence, read N- to C-terminus: Thiol:disulfide interchange protein DsbD (598 aa).

Residues 1 to 19 (MAYRIITLILLLCSTSATA) form the signal peptide. Residues C122 and C128 are joined by a disulfide bond. Residues 147 to 187 (DGQATAIEPMPSTSSRPAFNPPLPVEPRPAPELATSPAPAA) form a disordered region. Pro residues predominate over residues 165–176 (FNPPLPVEPRPA). Transmembrane regions (helical) follow at residues 197-217 (LPFT…TPCV), 242-262 (LLAF…GLVV), 277-297 (YVLV…FGLF), 330-350 (IAGL…LLYI), 356-376 (LWLG…PLIL), 391-411 (WMSH…VFLL), and 423-443 (LWSM…LGAT). C216 and C338 form a disulfide bridge. The Thioredoxin domain occupies 459–598 (LVSARPLQDW…FSAHLRDWQA (140 aa)). C513 and C516 are oxidised to a cystine.

Belongs to the thioredoxin family. DsbD subfamily.

The protein localises to the cell inner membrane. It carries out the reaction [protein]-dithiol + NAD(+) = [protein]-disulfide + NADH + H(+). It catalyses the reaction [protein]-dithiol + NADP(+) = [protein]-disulfide + NADPH + H(+). Functionally, required to facilitate the formation of correct disulfide bonds in some periplasmic proteins and for the assembly of the periplasmic c-type cytochromes. Acts by transferring electrons from cytoplasmic thioredoxin to the periplasm. This transfer involves a cascade of disulfide bond formation and reduction steps. The polypeptide is Thiol:disulfide interchange protein DsbD (Klebsiella pneumoniae subsp. pneumoniae (strain ATCC 700721 / MGH 78578)).